Consider the following 198-residue polypeptide: V-type ATP synthase subunit E (198 aa).

This sequence belongs to the V-ATPase E subunit family.

Its function is as follows. Produces ATP from ADP in the presence of a proton gradient across the membrane. The sequence is that of V-type ATP synthase subunit E from Clostridium perfringens (strain ATCC 13124 / DSM 756 / JCM 1290 / NCIMB 6125 / NCTC 8237 / Type A).